A 412-amino-acid polypeptide reads, in one-letter code: 43 kDa receptor-associated protein of the synapse (412 aa).

G2 carries N-myristoyl glycine lipidation. TPR repeat units lie at residues T6–P39, T83–T116, G123–N156, C163–Y196, A206–H239, A246–I279, and I286–L319. At Y196 the chain carries Phosphotyrosine. Residues C363–R403 form an RING-type zinc finger.

Belongs to the RAPsyn family. As to expression, expressed in muscle fibers and in neurons.

The protein resides in the cell membrane. The protein localises to the postsynaptic cell membrane. It localises to the cytoplasm. It is found in the cytoskeleton. Postsynaptic protein required for clustering of nicotinic acetylcholine receptors (nAChRs) at the neuromuscular junction. It may link the receptor to the underlying postsynaptic cytoskeleton, possibly by direct association with actin or spectrin. This chain is 43 kDa receptor-associated protein of the synapse (RAPSN), found in Gallus gallus (Chicken).